The primary structure comprises 360 residues: Probable ribonucleoside-diphosphate reductase small subunit 376L (360 aa).

Positions 67, 98, and 101 each coordinate Fe cation. Residue Tyr105 is part of the active site. 3 residues coordinate Fe cation: Glu172, Glu206, and His209.

It belongs to the ribonucleoside diphosphate reductase small chain family. In terms of assembly, heterotetramer composed of a homodimer of the large subunit (R1) and a homodimer of the small subunit (R2). Larger multisubunit protein complex are also active, composed of (R1)n(R2)n. It depends on Fe cation as a cofactor.

The enzyme catalyses a 2'-deoxyribonucleoside 5'-diphosphate + [thioredoxin]-disulfide + H2O = a ribonucleoside 5'-diphosphate + [thioredoxin]-dithiol. Ribonucleoside-diphosphate reductase holoenzyme provides the precursors necessary for viral DNA synthesis. Allows virus growth in non-dividing cells. Catalyzes the biosynthesis of deoxyribonucleotides from the corresponding ribonucleotides. The sequence is that of Probable ribonucleoside-diphosphate reductase small subunit 376L from Acheta domesticus (House cricket).